The following is a 317-amino-acid chain: Beta-ketoacyl-[acyl-carrier-protein] synthase III (317 aa).

Active-site residues include Cys-112 and His-244. An ACP-binding region spans residues 245 to 249 (QANIR). Asn-274 is an active-site residue.

This sequence belongs to the thiolase-like superfamily. FabH family. Homodimer.

Its subcellular location is the cytoplasm. It carries out the reaction malonyl-[ACP] + acetyl-CoA + H(+) = 3-oxobutanoyl-[ACP] + CO2 + CoA. It functions in the pathway lipid metabolism; fatty acid biosynthesis. Catalyzes the condensation reaction of fatty acid synthesis by the addition to an acyl acceptor of two carbons from malonyl-ACP. Catalyzes the first condensation reaction which initiates fatty acid synthesis and may therefore play a role in governing the total rate of fatty acid production. Possesses both acetoacetyl-ACP synthase and acetyl transacylase activities. Its substrate specificity determines the biosynthesis of branched-chain and/or straight-chain of fatty acids. In Rickettsia massiliae (strain Mtu5), this protein is Beta-ketoacyl-[acyl-carrier-protein] synthase III.